We begin with the raw amino-acid sequence, 748 residues long: Peroxisomal membrane protein PEX14 (748 aa).

Disordered regions lie at residues 1–138 (MDND…LSPS) and 190–228 (GNINGSSTNNSNITQSNSISRTRNDNYGNNNNNSSNNNN). The Peroxisomal portion of the chain corresponds to 1–277 (MDNDDINNNN…IAQLMMNNNR (277 aa)). The segment covering 7-30 (NNNNNNNNNNNNNNNSQELDQQEQ) has biased composition (low complexity). The stretch at 8–60 (NNNNNNNNNNNNNNSQELDQQEQTQEEITKQRIQKRKEEAKRIMEERKKREQQ) forms a coiled coil. A compositionally biased stretch (basic and acidic residues) spans 43-59 (RKEEAKRIMEERKKREQ). Residues 86–104 (PQRQQQYDDNDEPPQQQQY) show a composition bias toward polar residues. Composition is skewed to low complexity over residues 122 to 131 (TTSSTASAAT), 190 to 209 (GNINGSSTNNSNITQSNSIS), and 218 to 228 (NNNNNSSNNNN). Residues 241–277 (QQHQQQQQMALTQIQSYQKRLEADDQRIAQLMMNNNR) adopt a coiled-coil conformation. Residues 278–300 (FSWNSFLFSVTAIVGAASGLAYL) form a helical membrane-spanning segment. Over 301–748 (TSNYIIPFLN…INNTDSSVEK (448 aa)) the chain is Cytoplasmic. Positions 316–413 (KDASANMDKK…IGNKENSNNS (98 aa)) form a coiled coil. Disordered stretches follow at residues 406-673 (NKEN…ETPY) and 685-748 (KQGK…SVEK). Low complexity-rich tracts occupy residues 409 to 424 (NSNNSNNNSNNSNNNN) and 445 to 476 (STNNNNKTNSPPSPNKPTTTTTTTATSTPGSN). Over residues 510 to 527 (SWQQKSSNPPSDLSNAND) the composition is skewed to polar residues. Composition is skewed to low complexity over residues 528–542 (KSSPSNSNPSTPTKP) and 569–611 (TTTT…NNNN). Polar residues predominate over residues 612–627 (TTIASTSNESNNSKVE). Residues 628 to 661 (TTSNDSDKSTSPSSSSNNTTSTTATTTTITSAST) are compositionally biased toward low complexity. Basic and acidic residues predominate over residues 710-723 (SAKERPKKPWERDT). Residues 724 to 748 (LTSVTNNLSVEETQTINNTDSSVEK) show a composition bias toward polar residues.

The protein belongs to the peroxin-14 family. Interacts with PEX13; forming the PEX13-PEX14 docking complex. Interacts with PEX5 (via WxxxF/Y motifs).

The protein resides in the peroxisome membrane. Component of the PEX13-PEX14 docking complex, a translocon channel that specifically mediates the import of peroxisomal cargo proteins bound to PEX5 receptor. The PEX13-PEX14 docking complex forms a large import pore which can be opened to a diameter of about 9 nm. Mechanistically, PEX5 receptor along with cargo proteins associates with the PEX14 subunit of the PEX13-PEX14 docking complex in the cytosol, leading to the insertion of the receptor into the organelle membrane with the concomitant translocation of the cargo into the peroxisome matrix. This Dictyostelium discoideum (Social amoeba) protein is Peroxisomal membrane protein PEX14 (pex14).